A 245-amino-acid polypeptide reads, in one-letter code: 5'-nucleotidase SurE (245 aa).

A divalent metal cation-binding residues include Asp8, Asp9, Ser39, and Asn97.

Belongs to the SurE nucleotidase family. A divalent metal cation serves as cofactor.

The protein localises to the cytoplasm. It carries out the reaction a ribonucleoside 5'-phosphate + H2O = a ribonucleoside + phosphate. Functionally, nucleotidase that shows phosphatase activity on nucleoside 5'-monophosphates. The sequence is that of 5'-nucleotidase SurE from Clostridium kluyveri (strain NBRC 12016).